The sequence spans 78 residues: Large ribosomal subunit protein bL28 (78 aa).

The disordered stretch occupies residues 1-20 (MSQVCQVTGKRPVVGNNRSH).

This sequence belongs to the bacterial ribosomal protein bL28 family.

This is Large ribosomal subunit protein bL28 from Idiomarina loihiensis (strain ATCC BAA-735 / DSM 15497 / L2-TR).